Here is a 201-residue protein sequence, read N- to C-terminus: Superoxide dismutase [Mn/Fe] (201 aa).

4 residues coordinate Fe(3+): His27, His81, Asp162, and His166. 4 residues coordinate Mn(2+): His27, His81, Asp162, and His166.

It belongs to the iron/manganese superoxide dismutase family. As to quaternary structure, homodimer. It depends on Mn(2+) as a cofactor. Fe(3+) serves as cofactor.

It catalyses the reaction 2 superoxide + 2 H(+) = H2O2 + O2. Functionally, destroys superoxide anion radicals which are normally produced within the cells and which are toxic to biological systems. Catalyzes the dismutation of superoxide anion radicals into O2 and H2O2 by successive reduction and oxidation of the transition metal ion at the active site. In Staphylococcus carnosus, this protein is Superoxide dismutase [Mn/Fe] (sodA).